Reading from the N-terminus, the 267-residue chain is Phosphate import ATP-binding protein PstB (267 aa).

One can recognise an ABC transporter domain in the interval 21 to 262 (VAARNLDFYY…PSKQQTEDYI (242 aa)). 53 to 60 (GPSGCGKS) contacts ATP.

It belongs to the ABC transporter superfamily. Phosphate importer (TC 3.A.1.7) family. In terms of assembly, the complex is composed of two ATP-binding proteins (PstB), two transmembrane proteins (PstC and PstA) and a solute-binding protein (PstS).

Its subcellular location is the cell inner membrane. It catalyses the reaction phosphate(out) + ATP + H2O = ADP + 2 phosphate(in) + H(+). Functionally, part of the ABC transporter complex PstSACB involved in phosphate import. Responsible for energy coupling to the transport system. In Xanthomonas axonopodis pv. citri (strain 306), this protein is Phosphate import ATP-binding protein PstB.